A 485-amino-acid chain; its full sequence is WD repeat-containing protein 13 (485 aa).

An N-acetylmethionine modification is found at Met1. 3 positions are modified to phosphoserine: Ser70, Ser74, and Ser79. An Asymmetric dimethylarginine; alternate modification is found at Arg114. Position 114 is an omega-N-methylarginine; alternate (Arg114). WD repeat units follow at residues 162–202, 208–246, 250–290, 295–335, 341–389, 394–438, and 444–482; these read GMYH…LCQL, TVLR…IWAS, RCIR…VMNI, KVKG…LFDM, TKAK…VVDN, QLKR…FFDV, and AAVN…VWRR.

Widely expressed.

The protein localises to the nucleus. The chain is WD repeat-containing protein 13 (WDR13) from Homo sapiens (Human).